The chain runs to 308 residues: Taste receptor type 2 member 41 (308 aa).

Topologically, residues 1–7 (MLPTLSV) are extracellular. Residues 8-28 (FFMLTFVLLCFLGILANGFIV) traverse the membrane as a helical segment. Residues 29-60 (LMLSREWLLRGRLLPSDMILFSLGTSRFFQQC) are Cytoplasmic-facing. The chain crosses the membrane as a helical span at residues 61–81 (VGLVNSFYYFLHLVEYSGSLA). Residues 82–88 (RQLISLH) are Extracellular-facing. A helical membrane pass occupies residues 89-109 (WDFLNSATFWFCTWLSVLFCI). The Cytoplasmic portion of the chain corresponds to 110–128 (KIANFSHPAFLWLKWRFPA). Residues 129-149 (LVPWFLLGSILVSVIVTLLFF) form a helical membrane-spanning segment. The Extracellular segment spans residues 150–186 (WGNHTIYQAFLRRKFTGNTTFKEWNRRLEIDYFMPLK). N-linked (GlcNAc...) asparagine glycans are attached at residues Asn-152 and Asn-167. A helical transmembrane segment spans residues 187 to 207 (VVTMSIPCSLFLVSILLLISS). At 208–239 (LRRHSLRMQHNTHSLQDPNVQAHSRALKSLIS) the chain is on the cytoplasmic side. Residues 240–260 (FLVLYAVSFVSMIIDATVFIS) form a helical membrane-spanning segment. Topologically, residues 261–264 (SDNV) are extracellular. A helical transmembrane segment spans residues 265–285 (WYWPWQIILYFCMSVHPFILI). At 286-308 (TNNLRFRGTFRQLLLLARGFWVA) the chain is on the cytoplasmic side.

This sequence belongs to the G-protein coupled receptor T2R family. In terms of tissue distribution, expressed in subsets of taste receptor cells of the tongue and palate epithelium and exclusively in gustducin-positive cells.

Its subcellular location is the membrane. In terms of biological role, receptor that may play a role in the perception of bitterness and is gustducin-linked. May play a role in sensing the chemical composition of the gastrointestinal content. The activity of this receptor may stimulate alpha gustducin, mediate PLC-beta-2 activation and lead to the gating of TRPM5. The polypeptide is Taste receptor type 2 member 41 (Tas2r41) (Mus musculus (Mouse)).